Consider the following 238-residue polypeptide: Valine-rich protein (238 aa).

The first 16 residues, 1-16 (MQAVLLVVALFGAALA), serve as a signal peptide directing secretion.

As to expression, prismatic layer of shell (at protein level). Expressed primarily in the mantle with highest level in the mantle edge and lower level in the mantle pallium.

It localises to the secreted. The polypeptide is Valine-rich protein (Margaritifera margaritifera (Freshwater pearl mussel)).